We begin with the raw amino-acid sequence, 444 residues long: tRNA modification GTPase MnmE (444 aa).

(6S)-5-formyl-5,6,7,8-tetrahydrofolate is bound by residues arginine 23, glutamate 82, and lysine 121. The TrmE-type G domain occupies 216–365; sequence GTSIVLAGLP…LKQALQKWLN (150 aa). Position 226 (asparagine 226) interacts with K(+). GTP is bound by residues 226–231, 245–251, and 270–273; these read NAGKSS, TDIPGTT, and DSAG. Serine 230 contributes to the Mg(2+) binding site. Residues threonine 245, isoleucine 247, and threonine 250 each contribute to the K(+) site. Residue threonine 251 coordinates Mg(2+). (6S)-5-formyl-5,6,7,8-tetrahydrofolate is bound at residue lysine 444.

Belongs to the TRAFAC class TrmE-Era-EngA-EngB-Septin-like GTPase superfamily. TrmE GTPase family. Homodimer. Heterotetramer of two MnmE and two MnmG subunits. K(+) serves as cofactor.

The protein resides in the cytoplasm. Exhibits a very high intrinsic GTPase hydrolysis rate. Involved in the addition of a carboxymethylaminomethyl (cmnm) group at the wobble position (U34) of certain tRNAs, forming tRNA-cmnm(5)s(2)U34. This Chlamydia trachomatis serovar A (strain ATCC VR-571B / DSM 19440 / HAR-13) protein is tRNA modification GTPase MnmE.